We begin with the raw amino-acid sequence, 212 residues long: Regulator of G-protein signaling 2 (212 aa).

2 disordered regions span residues 11–33 (HDCG…REKM) and 48–69 (FLQN…PQTF). The segment at 32–66 (KMKRTLLKDWKTRLSYFLQNSSSPGKPKTGKKSKP) is necessary for membrane association. The interval 79–116 (LWAEAFDELLASKYGLAAFRAFLKSEFCEENIEFWLAC) is necessary to inhibit protein synthesis. An RGS domain is found at 83–199 (AFDELLASKY…LESEFYQDLC (117 aa)).

In terms of assembly, interacts with GNAQ. Does not interact with GNAI1 and GNAI3. Interacts with EIF2B5. Interacts with PRKG1 (isoform alpha). Post-translationally, phosphorylated by protein kinase C. Phosphorylation by PRKG1 leads to activation of RGS2 activity.

Its subcellular location is the cell membrane. The protein localises to the cytoplasm. It localises to the nucleus. It is found in the nucleolus. Its function is as follows. Regulates G protein-coupled receptor signaling cascades. Inhibits signal transduction by increasing the GTPase activity of G protein alpha subunits, thereby driving them into their inactive GDP-bound form. It is involved in the negative regulation of the angiotensin-activated signaling pathway. Plays a role in the regulation of blood pressure in response to signaling via G protein-coupled receptors and GNAQ. Plays a role in regulating the constriction and relaxation of vascular smooth muscle. Binds EIF2B5 and blocks its activity, thereby inhibiting the translation of mRNA into protein. This chain is Regulator of G-protein signaling 2 (RGS2), found in Sus scrofa (Pig).